The chain runs to 572 residues: MAEEAKAKGNAAFSSGDFTTAINHFTEAIALAPTNHVLFSNRSAAHASLHQYAEALSDAKETIKLKPYWPKGYSRLGAAHLGLNQFELAVTAYKKGLDVDPTNEALKSGLADAEASVARSRAAPNPFGDAFQGPEMWTKLTSDPSTRGFLQQPDFVNMMQEIQKNPSSLNLYLKDQRVMQSLGVLLNVKFRPPPPQGDEAEVPESDMGQSSSNEPEVEKKREPEPEPEPEVTEEKEKKERKEKAKKEKELGNAAYKKKDFETAIQHYSTAIEIDDEDISYLTNRAAVYLEMGKYNECIEDCNKAVERGRELRSDYKMVARALTRKGTALTKMAKCSKDYEPAIEAFQKALTEHRNPDTLKRLNDAERAKKEWEQKQYFDPKLGDEEREKGNDFFKEQKYPEAIKHYTEAIKRNPNDHKAYSNRAASYTKLGAMPEGLKDAEKCIELDPTFSKGYSRKAAVQFFLKEYDNAMETYQAGLEHDPSNQELLDGVKRCVQQINKANRGDLTPEELKERQAKGMQDPEIQNILTDPVMRQVLSDLQENPSAAQKHMQNPMVMNKIQKLISAGIVQMK.

3 TPR repeats span residues 2–35 (AEEA…APTN), 37–69 (VLFS…KPYW), and 70–103 (PKGY…DPTN). The region spanning 133 to 172 (GPEMWTKLTSDPSTRGFLQQPDFVNMMQEIQKNPSSLNLY) is the STI1 1 domain. Ser-167 carries the post-translational modification Phosphoserine. The tract at residues 189–248 (KFRPPPPQGDEAEVPESDMGQSSSNEPEVEKKREPEPEPEPEVTEEKEKKERKEKAKKEK) is disordered. A compositionally biased stretch (basic and acidic residues) spans 232–248 (TEEKEKKERKEKAKKEK). The short motif at 241–258 (KEKAKKEKELGNAAYKKK) is the Bipartite nuclear localization signal element. TPR repeat units follow at residues 244 to 277 (AKKE…DDED), 279 to 311 (SYLT…GREL), 319 to 356 (ARAL…HRNP), 358 to 382 (TLKR…DPKL), 383 to 416 (GDEE…NPND), 418 to 450 (KAYS…DPTF), and 451 to 484 (SKGY…DPSN). The 40-residue stretch at 521–560 (DPEIQNILTDPVMRQVLSDLQENPSAAQKHMQNPMVMNKI) folds into the STI1 2 domain.

In terms of assembly, co-chaperone that forms a complex with HSP70 and HSP90 and preproteins (e.g. chloroplast preproteins). Phosphorylated. In terms of processing, acetylated.

The protein localises to the cytoplasm. Its subcellular location is the nucleus. In terms of biological role, mediates the association of the molecular chaperones HSP70 and HSP90. Mediates nuclear encoded chloroplast preproteins binding to HSP90 prior to chloroplastic sorting. This chain is Hsp70-Hsp90 organizing protein 1 (HOP1), found in Arabidopsis thaliana (Mouse-ear cress).